A 394-amino-acid polypeptide reads, in one-letter code: Suppressor APC domain-containing protein 2 (394 aa).

3 disordered regions span residues 1–23 (MAGA…STEG), 95–125 (LLSA…RLVF), and 150–188 (GPSA…SSSA). Over residues 177 to 188 (SQSAALEPSSSA) the composition is skewed to polar residues. T219 is subject to Phosphothreonine. Residues 227–277 (GLLKQMKELEQEKEVLLQGLEMMARGRDWYQQQLQRVQERQRRLGQSRASA) adopt a coiled-coil conformation. S284 is modified (phosphoserine). Positions 336 to 384 (QQQTILMLKEQNRLLTQEVTEKSERITQLEQEKSALIKQLFEARALSQQ) form a coiled coil.

Interacts with a spindle orientation complex at least composed of GNAI1, GPSM2 and NUMA1. Interacts with GPSM2 (via TPR motifs); this interaction is required to prevent GPSM2 anchoring at the mitotic apical cortex and is inhibited in presence of NUMA1 in a dose dependent manner. Interacts with PARD3. Expressed in 5-month-old fetal tissues, including stomach, intestine, colon, liver, brain, lung, heart, spleen and kidney. Undetectable in non-cancerous adult tissues. Expressed in many primary gastric carcinoma, but almost not in adjacent normal mucosa. Expressed preferentially in M and G1 phases, compared to S and G2 phases. Expression is up-regulated in hepatocellular carcinoma (HCC) and colorectal cancer (CRC) tissues (at protein level).

Its subcellular location is the cytoplasm. It localises to the nucleus. The protein resides in the cell cortex. It is found in the apical cell membrane. The protein localises to the cell junction. Its subcellular location is the tight junction. In terms of biological role, plays a role in planar mitotic spindle orientation in retinal progenitor cells (RPCs) and promotes the production of symmetric terminal divisions. Negatively regulates the mitotic apical cortex localization of GPSM2. Involved also in positive regulation of cell proliferation and tumor cell growth. The polypeptide is Suppressor APC domain-containing protein 2 (Homo sapiens (Human)).